Consider the following 184-residue polypeptide: Calmodulin-related protein (184 aa).

EF-hand domains lie at 8-43 (DQIS…LGQN), 44-79 (PTEA…KMKD), 81-116 (DSEE…LGEK), and 117-152 (LTDE…NRRR). Asp-21, Asp-23, Asp-25, Cys-27, Glu-32, Asp-57, Asp-59, Asn-61, Thr-63, Glu-68, Asp-94, Asp-96, Asn-98, and Glu-105 together coordinate Ca(2+). N6,N6,N6-trimethyllysine is present on Lys-116. Ca(2+)-binding residues include Asp-130, Asp-132, Asp-134, Gln-136, and Glu-141. Positions 156–184 (EESKRSVNSNISRSNNGRKVRKRDRCTIL) are disordered. Low complexity predominate over residues 161–170 (SVNSNISRSN). Basic residues predominate over residues 171–184 (NGRKVRKRDRCTIL).

Belongs to the calmodulin family.

Calmodulin mediates the control of a large number of enzymes, ion channels and other proteins by Ca(2+). Among the enzymes to be stimulated by the calmodulin-Ca(2+) complex are a number of protein kinases and phosphatases. This is Calmodulin-related protein (CAM53) from Petunia hybrida (Petunia).